The following is a 1023-amino-acid chain: Sodium/potassium-transporting ATPase subunit alpha-1 (1023 aa).

Residues 1-5 (MGKGV) constitute a propeptide that is removed on maturation. Basic and acidic residues predominate over residues 1-11 (MGKGVGRDKYE). Residues 1–39 (MGKGVGRDKYEPAAVSEHGDKKGKKAKKERDMDELKKEV) are disordered. Residues 6-96 (GRDKYEPAAV…PEWVKFCRQL (91 aa)) are Cytoplasmic-facing. Lys-9 carries the post-translational modification N6-acetyllysine. Position 10 is a phosphotyrosine (Tyr-10). Ser-16 is modified (phosphoserine). Position 21 is an N6-acetyllysine (Lys-21). Residues 28–39 (KERDMDELKKEV) show a composition bias toward basic and acidic residues. Phosphoserine is present on residues Ser-40 and Ser-47. The tract at residues 82–84 (PPP) is phosphoinositide-3 kinase binding. The chain crosses the membrane as a helical span at residues 97–117 (FGGFSMLLWIGAILCFLAYGI). The Extracellular segment spans residues 118-129 (RSATEEEPPNDD). A helical membrane pass occupies residues 130–150 (LYLGVVLSAVVIITGCFSYYQ). Residues 151 to 291 (EAKSSKIMES…TPIAEEIEHF (141 aa)) are Cytoplasmic-facing. Residues 216–235 (SSLTGESEPQTRSPDFTNEN) form a disordered region. Ser-228 carries the phosphoserine modification. At Tyr-260 the chain carries Phosphotyrosine. A helical transmembrane segment spans residues 292–312 (IHLITGVAVFLGVSFFILSLI). Topologically, residues 313 to 319 (LEYTWLE) are extracellular. The helical transmembrane segment at 320–340 (AVIFLIGIIVANVPEGLLATV) threads the bilayer. At 341 to 775 (TVCLTLTAKR…RLIFDNLKKS (435 aa)) the chain is on the cytoplasmic side. Asp-376 acts as the 4-aspartylphosphate intermediate in catalysis. Residues Ser-452 and Ser-484 each carry the phosphoserine modification. Lys-487 serves as a coordination point for ATP. The residue at position 542 (Tyr-542) is a Phosphotyrosine. Residues 596-717 (RAAVPDAVGK…QGAIVAVTGD (122 aa)) are mediates interaction with SCN7A. The residue at position 661 (Lys-661) is an N6-succinyllysine. Ser-668 and Ser-675 each carry phosphoserine. The Mg(2+) site is built by Asp-717 and Asp-721. Residues 776–798 (IAYTLTSNIPEITPFLIFIIANI) form a helical membrane-spanning segment. Residues 799 to 801 (PLP) lie on the Extracellular side of the membrane. A helical transmembrane segment spans residues 802–824 (LGTVTILCIDLGTDMVPAISLAY). The Cytoplasmic segment spans residues 825–849 (EQAESDIMKRQPRNPKTDKLVNERL). Residues 850 to 872 (ISMAYGQIGMIQALGGFFTYFVI) form a helical membrane-spanning segment. At 873–915 (LAENGFLPFHLLGIRETWDDRWVNDVEDSYGQQWTYEQRKIVE) the chain is on the extracellular side. Residues 916 to 936 (FTCHTAFFVSIVVVQWADLVI) form a helical membrane-spanning segment. The Cytoplasmic segment spans residues 937-952 (CKTRRNSVFQQGMKNK). Ser-943 carries the post-translational modification Phosphoserine; by PKA. Residues 953–973 (ILIFGLFEETALAAFLSYCPG) traverse the membrane as a helical segment. The Extracellular portion of the chain corresponds to 974–979 (MGAALR). A helical membrane pass occupies residues 980–1000 (MYPLKPTWWFCAFPYSLLIFV). Residues 1001-1023 (YDEVRKLIIRRRPGGWVEKETYY) lie on the Cytoplasmic side of the membrane.

It belongs to the cation transport ATPase (P-type) (TC 3.A.3) family. Type IIC subfamily. As to quaternary structure, the sodium/potassium-transporting ATPase is composed of a catalytic alpha subunit, an auxiliary non-catalytic beta subunit and an additional regulatory subunit. Interacts with regulatory subunit FXYD1. Interacts with regulatory subunit FXYD3. Interacts with SIK1. Interacts with SLC35G1 and STIM1. Interacts with CLN3; this interaction regulates the sodium/potassium-transporting ATPase complex localization at the plasma membrane. Interacts with SCN7A; activates ATP1A1 P-type sodium:potassium-exchanging transporter activity which indirectly signals to nearby neurons to regulate sodium homeostasis. In terms of processing, phosphorylation on Tyr-10 modulates pumping activity. Phosphorylation of Ser-943 by PKA modulates the response of ATP1A1 to PKC. Dephosphorylation by protein phosphatase 2A (PP2A) following increases in intracellular sodium, leading to increase catalytic activity.

The protein localises to the cell membrane. It is found in the basolateral cell membrane. Its subcellular location is the sarcolemma. It localises to the cell projection. The protein resides in the axon. The protein localises to the melanosome. The catalysed reaction is K(+)(out) + Na(+)(in) + ATP + H2O = K(+)(in) + Na(+)(out) + ADP + phosphate + H(+). Its function is as follows. This is the catalytic component of the active enzyme, which catalyzes the hydrolysis of ATP coupled with the exchange of sodium and potassium ions across the plasma membrane. This action creates the electrochemical gradient of sodium and potassium ions, providing the energy for active transport of various nutrients. Could also be part of an osmosensory signaling pathway that senses body-fluid sodium levels and controls salt intake behavior as well as voluntary water intake to regulate sodium homeostasis. This Mus musculus (Mouse) protein is Sodium/potassium-transporting ATPase subunit alpha-1 (Atp1a1).